The chain runs to 221 residues: Iron-sulfur cluster repair protein YtfE (221 aa).

It belongs to the RIC family. YtfE subfamily. Homodimer.

The protein localises to the cytoplasm. Functionally, di-iron-containing protein involved in the repair of iron-sulfur clusters damaged by oxidative and nitrosative stress conditions. In Pectobacterium atrosepticum (strain SCRI 1043 / ATCC BAA-672) (Erwinia carotovora subsp. atroseptica), this protein is Iron-sulfur cluster repair protein YtfE.